The sequence spans 201 residues: Casparian strip membrane protein 4 (201 aa).

The disordered stretch occupies residues 1-23 (MEGKAAVTTSTEHGDGEASRTAA). The Cytoplasmic segment spans residues 1-41 (MEGKAAVTTSTEHGDGEASRTAARTVVSGSSRGGAASRALS). Residues 42 to 62 (VADLILRVVAVVAIVDSAIAM) traverse the membrane as a helical segment. The Extracellular portion of the chain corresponds to 63-87 (GTTNQTLPFFTQFLRFKAQYSDLPT). Asn66 carries an N-linked (GlcNAc...) asparagine glycan. Residues 88 to 108 (LTLFVVANSAVTAYLVLSIPL) traverse the membrane as a helical segment. Residues 109–122 (SVVHIIRSRASYSR) are Cytoplasmic-facing. A helical membrane pass occupies residues 123-143 (LVLIFLDSVMLALVAAVASAS). Topologically, residues 144 to 172 (AAIVYLAHKGNVRANWFAVCQQFDSFCER) are extracellular. Residues 173–193 (ISGPLIGSFAAMAVLLLLVLL) form a helical membrane-spanning segment. The Cytoplasmic segment spans residues 194–201 (SAAALARR).

This sequence belongs to the Casparian strip membrane proteins (CASP) family. As to quaternary structure, homodimer and heterodimers.

Its subcellular location is the cell membrane. Its function is as follows. Regulates membrane-cell wall junctions and localized cell wall deposition. Required for establishment of the Casparian strip membrane domain (CSD) and the subsequent formation of Casparian strips, a cell wall modification of the root endodermis that determines an apoplastic barrier between the intraorganismal apoplasm and the extraorganismal apoplasm and prevents lateral diffusion. The polypeptide is Casparian strip membrane protein 4 (Oryza sativa subsp. japonica (Rice)).